Consider the following 333-residue polypeptide: Glyceraldehyde-3-phosphate dehydrogenase (333 aa).

At S1 the chain carries N-acetylserine. Residues 10–11 (RI), D31, and S118 contribute to the NAD(+) site. D-glyceraldehyde 3-phosphate contacts are provided by residues 147–149 (SCT), T178, 207–208 (TG), and R230. C148 functions as the Nucleophile in the catalytic mechanism. N312 is an NAD(+) binding site.

Belongs to the glyceraldehyde-3-phosphate dehydrogenase family. Homotetramer.

It is found in the cytoplasm. It catalyses the reaction D-glyceraldehyde 3-phosphate + phosphate + NAD(+) = (2R)-3-phospho-glyceroyl phosphate + NADH + H(+). The protein operates within carbohydrate degradation; glycolysis; pyruvate from D-glyceraldehyde 3-phosphate: step 1/5. In Homarus americanus (American lobster), this protein is Glyceraldehyde-3-phosphate dehydrogenase.